A 170-amino-acid polypeptide reads, in one-letter code: Archaemetzincin (170 aa).

His110 is a Zn(2+) binding site. Glu111 acts as the Proton acceptor in catalysis. Positions 114, 120, 121, 125, 144, and 147 each coordinate Zn(2+).

It belongs to the peptidase M54 family. Monomer. Requires Zn(2+) as cofactor.

Its function is as follows. Probable zinc metalloprotease whose natural substrate is unknown. The protein is Archaemetzincin of Nanoarchaeum equitans (strain Kin4-M).